Reading from the N-terminus, the 52-residue chain is UPF0181 protein CGSHiGG_01050 (52 aa).

It belongs to the UPF0181 family.

This is UPF0181 protein CGSHiGG_01050 from Haemophilus influenzae (strain PittGG).